Here is a 377-residue protein sequence, read N- to C-terminus: Citrate synthase (377 aa).

Residues H258 and D313 contribute to the active site.

Belongs to the citrate synthase family. In terms of assembly, homodimer. Post-translationally, the N-terminus is blocked by acetylation.

It catalyses the reaction oxaloacetate + acetyl-CoA + H2O = citrate + CoA + H(+). The protein operates within carbohydrate metabolism; tricarboxylic acid cycle; isocitrate from oxaloacetate: step 1/2. Allosterically inhibited by NADH. The protein is Citrate synthase (gltA) of Saccharolobus solfataricus (strain ATCC 35092 / DSM 1617 / JCM 11322 / P2) (Sulfolobus solfataricus).